The chain runs to 259 residues: Haloacid dehalogenase-like hydrolase domain-containing protein 2 (259 aa).

Mg(2+) is bound by residues aspartate 13 and serine 15. Residues 13–15 (DLS) and 46–47 (TN) each bind substrate. Residues 49 to 71 (TKESKRDLLERLRKLEFDISEEE) adopt a coiled-coil conformation. At lysine 50 the chain carries N6-succinyllysine. Lysine 179 contacts substrate. A Mg(2+)-binding site is contributed by aspartate 204.

It belongs to the HAD-like hydrolase superfamily. Requires Mg(2+) as cofactor.

This chain is Haloacid dehalogenase-like hydrolase domain-containing protein 2 (Hdhd2), found in Rattus norvegicus (Rat).